We begin with the raw amino-acid sequence, 3374 residues long: Abnormal spindle-like microcephaly-associated protein homolog (3374 aa).

Phosphoserine occurs at positions 212, 215, 300, and 325. The disordered stretch occupies residues 492 to 518 (SSKNIVTPPCKAASVARKRKSKGHTGD). Position 540 is a phosphoserine (Ser540). Residues 855 to 991 (KASXDILLAF…LLWKIALAFQ (137 aa)) form the Calponin-homology (CH) 1 domain. A coiled-coil region spans residues 992–1013 (VDISLNLDQLKEEIDFLKKTQS). Ser1038 carries the phosphoserine modification. The Calponin-homology (CH) 2 domain maps to 1045-1196 (SESVKLLMDW…YLSFLCARLL (152 aa)). IQ domains are found at residues 1201 to 1230 (ETRA…RDKA), 1282 to 1313 (HSKS…IILQ), 1472 to 1503 (KRAA…VLQS), 1567 to 1596 (TRSA…AVVK), 1590 to 1619 (ILTA…ATVK), 1613 to 1642 (LKKA…IAQQ), 1647 to 1678 (LRAS…VLLQ), 1720 to 1749 (VRRA…AALK), 1743 to 1772 (QSAA…SALK), 1793 to 1822 (TRTA…AAVK), 1816 to 1847 (EHEA…SVIQ), 1866 to 1897 (LRRA…IIIQ), 1939 to 1968 (TKGA…AATT), 1962 to 1993 (MHQA…VIIQ), 2012 to 2043 (VKKA…TLIK), 2035 to 2066 (MHMA…IVIQ), 2085 to 2116 (TLKA…TLIQ), 2108 to 2137 (MRTA…VTKT), 2158 to 2189 (LRRS…AVIQ), 2181 to 2212 (MHSA…VWVQ), 2230 to 2261 (LQKA…TVLQ), 2253 to 2284 (MRRA…QVIQ), 2303 to 2334 (QXRS…TLIQ), 2326 to 2357 (MHAS…VFVQ), 2376 to 2407 (LKKA…ALIQ), 2399 to 2430 (MHRA…VLIQ), 2449 to 2480 (WRHS…VIIQ), 2472 to 2503 (KHRA…KVIQ), 2542 to 2573 (QHQA…VFVQ), 2583 to 2612 (RTQA…AATR), 2606 to 2637 (MHLA…VVIQ), 2656 to 2685 (IQKS…EKMA), 2732 to 2763 (QRKA…QIQS), 2777 to 2806 (QKRA…AAVG), 2827 to 2856 (IRSS…STIK), 2850 to 2881 (LKDS…RIQA), 2872 to 2903 (EVKA…RIIQ), 2947 to 2976 (RHQA…AALT), 2997 to 3028 (LKKS…RLLH), 3099 to 3128 (HSRA…RIAK), and 3122 to 3153 (LNKR…IRQR).

The protein localises to the cytoplasm. It localises to the cytoskeleton. The protein resides in the spindle. Its subcellular location is the nucleus. In terms of biological role, probable role in mitotic spindle regulation and coordination of mitotic processes. May have a preferential role in regulating neurogenesis. This is Abnormal spindle-like microcephaly-associated protein homolog (ASPM) from Ovis aries (Sheep).